A 588-amino-acid polypeptide reads, in one-letter code: Protein kinase C iota type (588 aa).

The PB1 domain maps to Gln-18–Cys-101. The Phorbol-ester/DAG-type zinc-finger motif lies at Gly-133 to Cys-183. Positions Gly-194–Lys-213 are disordered. One can recognise a Protein kinase domain in the interval Phe-246–Phe-514. Residues Ile-252–Val-260 and Lys-275 each bind ATP. The Proton acceptor role is filled by Asp-370. A phosphothreonine mark is found at Thr-404 and Thr-556. The region spanning Arg-515–Glu-586 is the AGC-kinase C-terminal domain.

It belongs to the protein kinase superfamily. AGC Ser/Thr protein kinase family. PKC subfamily.

It carries out the reaction L-seryl-[protein] + ATP = O-phospho-L-seryl-[protein] + ADP + H(+). The enzyme catalyses L-threonyl-[protein] + ATP = O-phospho-L-threonyl-[protein] + ADP + H(+). Exhibits an elevated basal enzymatic activity and is not regulated by diacylglycerol, phosphatidylserine, phorbol esters or calcium ions. Two specific sites, Thr-404 (activation loop of the kinase domain) and Thr-556 (turn motif), need to be phosphorylated for its full activation. Calcium- and diacylglycerol-independent serine/ threonine-protein kinase that plays a general protective role against apoptotic stimuli, is involved in NF-kappa-B activation, cell survival, differentiation and polarity, and contributes to the regulation of microtubule dynamics in the early secretory pathway. Is required for the formation and maintenance of the zonula adherens during early epithelial development and plays a critical role in organ morphogenesis and in regulating the orientation of cell division. Required for polarized epithelial organization, myocardium coherence and cell connectivity in the early somite stages. Required for heart cone tilt and development of circulatory architecture during embryogenesis. This chain is Protein kinase C iota type (prkci), found in Danio rerio (Zebrafish).